Consider the following 310-residue polypeptide: Basic salivary proline-rich protein 4 (310 aa).

An N-terminal signal peptide occupies residues M1–A16. The disordered stretch occupies residues S14–Q310. A run of 9 repeats spans residues K35–G55, K56–G76, K77–G97, K98–G118, K119–G139, K140–G160, K161–G181, K182–G202, and K203–G223. The interval K35–N234 is 9.5 X 21 AA tandem repeats of K-P-[EQ]-[GR]-[PR]-[PR]-P-Q-G-G-N-Q-[PS]-[QH]-[RG]-[PT]-P-P-[PH]-P-G. Positions Q48–Q63 are enriched in pro residues. N66, N87, and N108 each carry an N-linked (GlcNAc...) asparagine glycan. Positions G133–Q147 are enriched in pro residues. N-linked (GlcNAc...) asparagine glycans are attached at residues N150, N171, and N192. Positions R196 to Q210 are enriched in pro residues. An N-linked (GlcNAc...) asparagine glycan is attached at N213. Residues G217–Q231 are compositionally biased toward pro residues. The stretch at K224–N234 is one 10; truncated repeat. A glycan (N-linked (GlcNAc...) asparagine) is linked at N234. Over residues Q258–Q310 the composition is skewed to pro residues.

N-glycosylated. Post-translationally, proteolytically cleaved at the tripeptide Xaa-Pro-Gln, where Xaa in the P(3) position is mostly lysine. The endoprotease may be of microbial origin. Pyroglutamate formation found on at least Gln-46, Gln-48, Gln-67, Gln-88; Gln-90; Gln-193; Gln-288 Gln-214 and Gln-295, preferentially in diabetic, and head and neck cancer patients.

It localises to the secreted. The sequence is that of Basic salivary proline-rich protein 4 (PRB4) from Homo sapiens (Human).